We begin with the raw amino-acid sequence, 381 residues long: 40-kDa huntingtin-associated protein (381 aa).

An N-acetylalanine modification is found at Ala-2. A Nuclear localization signal motif is present at residues 34 to 36 (KKR). The disordered stretch occupies residues 221-265 (QLELLPQPPSGPQPPLSGPQPRPVLGSTLPLPQPPDHAPGSVAPS). The span at 226-242 (PQPPSGPQPPLSGPQPR) shows a compositional bias: pro residues.

In terms of assembly, interacts with HTT (via C-terminus). Interacts with RAB5A. Found in a complex with F8A1/F8A2/F8A3, HTT and RAB5A; mediates the recruitment of HTT by RAB5A onto early endosomes. In terms of tissue distribution, produced abundantly in a wide variety of cell types.

The protein resides in the cytoplasm. The protein localises to the nucleus. It is found in the early endosome. Its subcellular location is the nuclear body. Its function is as follows. RAB5A effector molecule that is involved in vesicular trafficking of early endosomes. Mediates the recruitment of HTT by RAB5A onto early endosomes. The HTT-F8A1/F8A2/F8A3-RAB5A complex stimulates early endosomal interaction with actin filaments and inhibits interaction with microtubules, leading to the reduction of endosome motility. The sequence is that of 40-kDa huntingtin-associated protein (F8a1) from Mus musculus (Mouse).